The chain runs to 306 residues: Methionyl-tRNA formyltransferase (306 aa).

110–113 (SLLP) lines the (6S)-5,6,7,8-tetrahydrofolate pocket.

It belongs to the Fmt family.

The catalysed reaction is L-methionyl-tRNA(fMet) + (6R)-10-formyltetrahydrofolate = N-formyl-L-methionyl-tRNA(fMet) + (6S)-5,6,7,8-tetrahydrofolate + H(+). Attaches a formyl group to the free amino group of methionyl-tRNA(fMet). The formyl group appears to play a dual role in the initiator identity of N-formylmethionyl-tRNA by promoting its recognition by IF2 and preventing the misappropriation of this tRNA by the elongation apparatus. The chain is Methionyl-tRNA formyltransferase from Brucella ovis (strain ATCC 25840 / 63/290 / NCTC 10512).